We begin with the raw amino-acid sequence, 500 residues long: NAD(P)H-quinone oxidoreductase chain 4, chloroplastic (500 aa).

14 consecutive transmembrane segments (helical) span residues 4 to 24, 35 to 55, 87 to 107, 113 to 130, 134 to 154, 167 to 187, 211 to 231, 242 to 262, 272 to 292, 305 to 325, 330 to 350, 386 to 406, 416 to 436, and 462 to 482; these read FPWL…MLFL, YTIC…CYNF, IGTI…AFPV, LFHF…GSFS, LLLF…LLAM, FILY…GLSL, ILFY…IPLH, HYST…YGLV, AHSM…IYAA, IAYS…SITD, GAIL…FLAG, LALP…GIIT, ILII…LLSM, and LFLS…PDFV.

This sequence belongs to the complex I subunit 4 family.

The protein localises to the plastid. The protein resides in the chloroplast thylakoid membrane. It catalyses the reaction a plastoquinone + NADH + (n+1) H(+)(in) = a plastoquinol + NAD(+) + n H(+)(out). The enzyme catalyses a plastoquinone + NADPH + (n+1) H(+)(in) = a plastoquinol + NADP(+) + n H(+)(out). The sequence is that of NAD(P)H-quinone oxidoreductase chain 4, chloroplastic from Lepidium virginicum (Virginia pepperweed).